Consider the following 144-residue polypeptide: Large ribosomal subunit protein uL16 (144 aa).

Residues 1 to 16 (MLVPKRVKHRKVQRGH) show a composition bias toward basic residues. The disordered stretch occupies residues 1 to 20 (MLVPKRVKHRKVQRGHMRGE).

This sequence belongs to the universal ribosomal protein uL16 family. In terms of assembly, part of the 50S ribosomal subunit.

Functionally, binds 23S rRNA and is also seen to make contacts with the A and possibly P site tRNAs. The chain is Large ribosomal subunit protein uL16 from Limosilactobacillus reuteri (strain DSM 20016) (Lactobacillus reuteri).